The primary structure comprises 949 residues: Glycine dehydrogenase (decarboxylating) (949 aa).

At Lys700 the chain carries N6-(pyridoxal phosphate)lysine.

The protein belongs to the GcvP family. As to quaternary structure, the glycine cleavage system is composed of four proteins: P, T, L and H. Pyridoxal 5'-phosphate is required as a cofactor.

It carries out the reaction N(6)-[(R)-lipoyl]-L-lysyl-[glycine-cleavage complex H protein] + glycine + H(+) = N(6)-[(R)-S(8)-aminomethyldihydrolipoyl]-L-lysyl-[glycine-cleavage complex H protein] + CO2. In terms of biological role, the glycine cleavage system catalyzes the degradation of glycine. The P protein binds the alpha-amino group of glycine through its pyridoxal phosphate cofactor; CO(2) is released and the remaining methylamine moiety is then transferred to the lipoamide cofactor of the H protein. The polypeptide is Glycine dehydrogenase (decarboxylating) (Christiangramia forsetii (strain DSM 17595 / CGMCC 1.15422 / KT0803) (Gramella forsetii)).